Reading from the N-terminus, the 397-residue chain is 1-carboxy-3-chloro-3,4-dihydroxycyclo hexa-1,5-diene dehydrogenase (397 aa).

This sequence to P.putida PHT4.

The polypeptide is 1-carboxy-3-chloro-3,4-dihydroxycyclo hexa-1,5-diene dehydrogenase (cbaC) (Comamonas testosteroni (Pseudomonas testosteroni)).